The chain runs to 327 residues: tRNA uridine(34) hydroxylase (327 aa).

The Rhodanese domain occupies 130–224; sequence LDEDTVVLDT…YGKDPEVRGE (95 aa). The Cysteine persulfide intermediate role is filled by cysteine 184.

This sequence belongs to the TrhO family.

It carries out the reaction uridine(34) in tRNA + AH2 + O2 = 5-hydroxyuridine(34) in tRNA + A + H2O. Catalyzes oxygen-dependent 5-hydroxyuridine (ho5U) modification at position 34 in tRNAs. The polypeptide is tRNA uridine(34) hydroxylase (Streptococcus suis (strain 98HAH33)).